Consider the following 324-residue polypeptide: Polycomb complex protein BMI-1-B (324 aa).

The RING-type zinc-finger motif lies at 18 to 57; that stretch reads CVLCGGYFIDATTIVECLHSFCKMCIVRYLETSKYCPICD. Residues 81-95 carry the Nuclear localization signal motif; sequence KLVPGLFKNEMKRRR. A disordered region spans residues 232–324; the sequence is IKLSSPRNDM…TSHNGSNSLG (93 aa). Residues 256–279 are compositionally biased toward low complexity; it reads DKPNSPSIVAAPSTSSSMPSPNTP. 2 stretches are compositionally biased toward polar residues: residues 280-295 and 303-324; these read VQST…TING and NGQT…NSLG.

In terms of assembly, component of a PRC1-like complex. Homodimer. Interacts with cbx2.

The protein resides in the nucleus. Component of a Polycomb group (PcG) multiprotein PRC1-like complex, a complex class required to maintain the transcriptionally repressive state of many genes, including Hox genes, throughout development. PcG PRC1 complex acts via chromatin remodeling and modification of histones; it mediates monoubiquitination of histone H2A 'Lys-119', rendering chromatin heritably changed in its expressibility. In the PRC1 complex, it is required to stimulate the E3 ubiquitin-protein ligase activity of rnf2. The chain is Polycomb complex protein BMI-1-B (bmi1b) from Danio rerio (Zebrafish).